The chain runs to 248 residues: MAQRRFFVGGNWKMNGNKESLEELMSTLNTASLHEDTEVVCAAPSIYLDFARSGLDSRISVAAQNCYKVAKGAFTGEISPAMIKDCGADWVILGHSERRHVFGENDELIGQKVAHALESDLSVIACIGEKLEEREAGTTEDVIFAQTQVIAENVMDWEKVVLAYEPVWAIGTGKTATPEQAQEVHEKLRAWFRANISEEVSDSLRIIYGGSVTAANCRELASQTDVDGFLVGGASLKPEFIDIINARA.

N11 and K13 together coordinate substrate. H95 functions as the Electrophile in the catalytic mechanism. E165 (proton acceptor) is an active-site residue.

This sequence belongs to the triosephosphate isomerase family. Homodimer.

It localises to the cytoplasm. It catalyses the reaction D-glyceraldehyde 3-phosphate = dihydroxyacetone phosphate. The enzyme catalyses dihydroxyacetone phosphate = methylglyoxal + phosphate. The protein operates within carbohydrate degradation; glycolysis; D-glyceraldehyde 3-phosphate from glycerone phosphate: step 1/1. Its pathway is carbohydrate biosynthesis; gluconeogenesis. Triosephosphate isomerase is an extremely efficient metabolic enzyme that catalyzes the interconversion between dihydroxyacetone phosphate (DHAP) and D-glyceraldehyde-3-phosphate (G3P) in glycolysis and gluconeogenesis. Functionally, it is also responsible for the non-negligible production of methylglyoxal a reactive cytotoxic side-product that modifies and can alter proteins, DNA and lipids. This chain is Triosephosphate isomerase (tpi1), found in Oryzias latipes (Japanese rice fish).